The following is a 341-amino-acid chain: Type II restriction enzyme BgcI specificity subunit S.BcgI (341 aa).

It belongs to the type-I restriction system S methylase family. Heterotrimer of two A and one B subunit. Both subunits are necessary for DNA-binding, which is sequence non-specific. Mg(2+) serves as cofactor.

The catalysed reaction is Endonucleolytic cleavage of DNA to give specific double-stranded fragments with terminal 5'-phosphates.. DNA restriction requires S-adenosyl-L-methionine and Mg(2+), and is inhibited by S-adenosyl-homocysteine. SAM may be a cofactor for DNA restriction. Its function is as follows. The specificity subunit. A B, G, H and S subtype restriction enzyme that recognizes the double-stranded sequence 5'-CGAN(6)TGC-3' and cleaves bilaterally and symmetrically 10 base pairs upstream and 12 base pairs downstream of the sequence to release a 34-base pair fragment. Methylation of the recognition sequence occurs on the adenine in either one or both strands; seems to methylate restricted DNA. This subunit degrades DNA in a non-specific manner. This chain is Type II restriction enzyme BgcI specificity subunit S.BcgI, found in Heyndrickxia coagulans (Weizmannia coagulans).